A 657-amino-acid chain; its full sequence is tRNA 5-methylaminomethyl-2-thiouridine biosynthesis bifunctional protein MnmC (657 aa).

Positions 1–239 (MTDRIVPATL…KRAMLVGEFA (239 aa)) are tRNA (mnm(5)s(2)U34)-methyltransferase. Positions 263 to 657 (IGAGLAGCAV…VRALRHGRVA (395 aa)) are FAD-dependent cmnm(5)s(2)U34 oxidoreductase.

The protein in the N-terminal section; belongs to the methyltransferase superfamily. tRNA (mnm(5)s(2)U34)-methyltransferase family. In the C-terminal section; belongs to the DAO family. It depends on FAD as a cofactor.

The protein localises to the cytoplasm. It catalyses the reaction 5-aminomethyl-2-thiouridine(34) in tRNA + S-adenosyl-L-methionine = 5-methylaminomethyl-2-thiouridine(34) in tRNA + S-adenosyl-L-homocysteine + H(+). Functionally, catalyzes the last two steps in the biosynthesis of 5-methylaminomethyl-2-thiouridine (mnm(5)s(2)U) at the wobble position (U34) in tRNA. Catalyzes the FAD-dependent demodification of cmnm(5)s(2)U34 to nm(5)s(2)U34, followed by the transfer of a methyl group from S-adenosyl-L-methionine to nm(5)s(2)U34, to form mnm(5)s(2)U34. This chain is tRNA 5-methylaminomethyl-2-thiouridine biosynthesis bifunctional protein MnmC, found in Burkholderia mallei (strain SAVP1).